Here is a 546-residue protein sequence, read N- to C-terminus: Sulfite oxidase, mitochondrial (546 aa).

The N-terminal 80 residues, 1 to 80 (MLPRLYRSVA…YHDHRCRASQ (80 aa)), are a transit peptide targeting the mitochondrion. The Cytochrome b5 heme-binding domain maps to 83 to 162 (PRIYSKEDVR…LAEYKIGELN (80 aa)). Heme b is bound at residue His-119. The residue at position 124 (Ser-124) is a Phosphoserine. Positions 144, 146, and 148 each coordinate heme b. The interval 166 to 175 (RMSPPLEASD) is hinge. A moco domain region spans residues 176-402 (PYSNDPMRHP…YSHWQRRDYK (227 aa)). Mo-molybdopterin-binding positions include 216-220 (FTRNH), Cys-265, Asp-323, His-362, Arg-367, and 378-380 (HVK). Residues 403-539 (GFSPSVDWDT…RGVLSNAWHR (137 aa)) form a homodimerization region.

As to quaternary structure, homodimer. It depends on heme b as a cofactor. Mo-molybdopterin is required as a cofactor.

The protein localises to the mitochondrion intermembrane space. It carries out the reaction sulfite + O2 + H2O = sulfate + H2O2. Its pathway is energy metabolism; sulfur metabolism. Catalyzes the oxidation of sulfite to sulfate, the terminal reaction in the oxidative degradation of sulfur-containing amino acids. This is Sulfite oxidase, mitochondrial from Rattus norvegicus (Rat).